The following is a 317-amino-acid chain: Melanocyte-stimulating hormone receptor (317 aa).

The Extracellular segment spans residues 1-37 (MVWQGPQRRLLGSLNGTSPATPHFELAANQTGPRCLE). Residues Asn-15 and Asn-29 are each glycosylated (N-linked (GlcNAc...) asparagine). The chain crosses the membrane as a helical span at residues 38-63 (VSIPNGLFLSLGLVSVVENVLVVAAI). Over 64-72 (AKNRNLHSP) the chain is Cytoplasmic. The chain crosses the membrane as a helical span at residues 73–93 (MYYFIGCLAVSDLLVSVTNVL). Topologically, residues 94–118 (ETAVMLLVEAGALAAQAAVVQQLDD) are extracellular. The chain crosses the membrane as a helical span at residues 119–140 (IIDVLICGSMVSSLCFLGAIAV). Over 141 to 163 (DRYLSIFYALRYHSIVTLPRAWR) the chain is Cytoplasmic. The helical transmembrane segment at 164–183 (AISAIWVASVLSSTLFIAYY) threads the bilayer. The Extracellular portion of the chain corresponds to 184–191 (NHTAVLLC). Residues 192–211 (LVSFFVAMLVLMAVLYVHML) form a helical membrane-spanning segment. Over 212 to 240 (ARARQHARGIARLRKRQHSVHQGFGLKGA) the chain is Cytoplasmic. A helical membrane pass occupies residues 241–266 (ATLTILLGIFFLCWGPFFLHLSLMVL). Over 267-279 (CPQHPICGCVFQN) the chain is Extracellular. The chain crosses the membrane as a helical span at residues 280 to 300 (FNLFLTLIICNSIIDPFIYAF). Topologically, residues 301-317 (RSQELRKTLQEVVLCSW) are cytoplasmic. A lipid anchor (S-palmitoyl cysteine) is attached at Cys-315.

This sequence belongs to the G-protein coupled receptor 1 family. Interacts with MGRN1, but does not undergo MGRN1-mediated ubiquitination; this interaction competes with GNAS-binding and thus inhibits agonist-induced cAMP production. Interacts with OPN3; the interaction results in a decrease in MC1R-mediated cAMP signaling and ultimately a decrease in melanin production in melanocytes.

It localises to the cell membrane. Functionally, receptor for MSH (alpha, beta and gamma) and ACTH. The activity of this receptor is mediated by G proteins which activate adenylate cyclase. Mediates melanogenesis, the production of eumelanin (black/brown) and phaeomelanin (red/yellow), via regulation of cAMP signaling in melanocytes. This Canis lupus familiaris (Dog) protein is Melanocyte-stimulating hormone receptor (MC1R).